The sequence spans 497 residues: Replication factor C large subunit (497 aa).

50–57 (GPAGVGKT) is an ATP binding site. Over residues 428 to 455 (KRRSLGRDEGKAFFEKKPKKQTPDKKQM) the composition is skewed to basic and acidic residues. Positions 428-497 (KRRSLGRDEG…AKPQKTLFDF (70 aa)) are disordered. The span at 456–465 (DLTQIINSTP) shows a compositional bias: polar residues. Residues 466 to 476 (QEDKVEKKETE) show a composition bias toward basic and acidic residues.

The protein belongs to the activator 1 small subunits family. RfcL subfamily. Heteromultimer composed of small subunits (RfcS) and large subunits (RfcL).

Functionally, part of the RFC clamp loader complex which loads the PCNA sliding clamp onto DNA. The polypeptide is Replication factor C large subunit (Methanococcoides burtonii (strain DSM 6242 / NBRC 107633 / OCM 468 / ACE-M)).